Reading from the N-terminus, the 170-residue chain is Probable peptide methionine sulfoxide reductase (170 aa).

Belongs to the MsrA Met sulfoxide reductase family.

Its subcellular location is the cytoplasm. The protein resides in the nucleus. The enzyme catalyses L-methionyl-[protein] + [thioredoxin]-disulfide + H2O = L-methionyl-(S)-S-oxide-[protein] + [thioredoxin]-dithiol. The catalysed reaction is [thioredoxin]-disulfide + L-methionine + H2O = L-methionine (S)-S-oxide + [thioredoxin]-dithiol. Functionally, has an important function as a repair enzyme for proteins that have been inactivated by oxidation. Catalyzes the reversible oxidation-reduction of methionine sulfoxide in proteins to methionine. This chain is Probable peptide methionine sulfoxide reductase (mxr1), found in Schizosaccharomyces pombe (strain 972 / ATCC 24843) (Fission yeast).